Consider the following 346-residue polypeptide: Syntaxin UFE1 (346 aa).

The Cytoplasmic segment spans residues M1 to T324. The t-SNARE coiled-coil homology domain occupies L255–A317. A helical; Anchor for type IV membrane protein transmembrane segment spans residues A325–L342. The Lumenal portion of the chain corresponds to D343–G346.

The protein belongs to the syntaxin family. Component of a SNARE complex consisting of UFE1, USE1, SEC20 and SEC22 or YKT6.

The protein resides in the endoplasmic reticulum membrane. Its function is as follows. Syntaxin required for targeting and fusion of Golgi-derived retrograde transport vesicles with the ER. The sequence is that of Syntaxin UFE1 (UFE1) from Saccharomyces cerevisiae (strain ATCC 204508 / S288c) (Baker's yeast).